The sequence spans 199 residues: MNEYIESCHREKHTYDEEGVREAVRLFLKSIGEDPEREGLVETPDRIARACRELFTGLQASPADALEKHFDVDTDELVLVKDIELYSVCEHHLLPFHGVAHVGYIPAKDGVMGLSKLARLVEVYARRPQVQERLTQQIADALVEYAGARGVIVVTECEHLCMSMRGIKKSSARTVTSAVRGMLRNPATRAEAMSLILDK.

Residues cysteine 89, histidine 92, and cysteine 161 each contribute to the Zn(2+) site.

It belongs to the GTP cyclohydrolase I family. In terms of assembly, toroid-shaped homodecamer, composed of two pentamers of five dimers.

The enzyme catalyses GTP + H2O = 7,8-dihydroneopterin 3'-triphosphate + formate + H(+). It participates in cofactor biosynthesis; 7,8-dihydroneopterin triphosphate biosynthesis; 7,8-dihydroneopterin triphosphate from GTP: step 1/1. The polypeptide is GTP cyclohydrolase 1 (Bifidobacterium longum (strain NCC 2705)).